The sequence spans 146 residues: Calmodulin-like protein 5 (146 aa).

Ala-2 carries the post-translational modification N-acetylalanine. 4 EF-hand domains span residues 8–43 (EEEA…TGKN), 44–74 (LSEA…TAAK), 78–113 (AGLE…LGQP), and 114–146 (LPQE…LAQE). 20 residues coordinate Ca(2+): Asp-21, Asp-23, Asn-25, Thr-27, Glu-32, Asp-57, Asp-59, Asp-61, Glu-63, Glu-68, Asp-91, Asp-93, Asp-95, His-97, Glu-102, Asp-127, Asp-129, Asp-131, Arg-133, and Glu-138.

Associates with transglutaminase 3. As to expression, particularly abundant in the epidermis where its expression is directly related to keratinocyte differentiation. Very low expression in lung.

In terms of biological role, binds calcium. May be involved in terminal differentiation of keratinocytes. This is Calmodulin-like protein 5 (CALML5) from Homo sapiens (Human).